We begin with the raw amino-acid sequence, 426 residues long: Protein TolB homolog (426 aa).

Residues 1 to 19 (MFLRSFLCLLCLLPSILYC) form the signal peptide.

Belongs to the TolB family.

Its subcellular location is the periplasm. The protein is Protein TolB homolog of Chlamydia muridarum (strain MoPn / Nigg).